Consider the following 222-residue polypeptide: ATP synthase F(0) complex subunit a (222 aa).

6 helical membrane passes run 7–27, 64–84, 93–113, 132–152, 160–180, and 197–219; these read AFFD…AILL, WSLM…LGLL, QLTV…VLGF, FLIP…PITL, ITAG…LLSV, and ILEL…LYLH.

It belongs to the ATPase A chain family. Component of the ATP synthase complex composed at least of ATP5F1A/subunit alpha, ATP5F1B/subunit beta, ATP5MC1/subunit c (homooctomer), MT-ATP6/subunit a, MT-ATP8/subunit 8, ATP5ME/subunit e, ATP5MF/subunit f, ATP5MG/subunit g, ATP5MK/subunit k, ATP5MJ/subunit j, ATP5F1C/subunit gamma, ATP5F1D/subunit delta, ATP5F1E/subunit epsilon, ATP5PF/subunit F6, ATP5PB/subunit b, ATP5PD/subunit d, ATP5PO/subunit OSCP. ATP synthase complex consists of a soluble F(1) head domain (subunits alpha(3) and beta(3)) - the catalytic core - and a membrane F(0) domain - the membrane proton channel (subunits c, a, 8, e, f, g, k and j). These two domains are linked by a central stalk (subunits gamma, delta, and epsilon) rotating inside the F1 region and a stationary peripheral stalk (subunits F6, b, d, and OSCP). Interacts with DNAJC30; interaction is direct.

The protein localises to the mitochondrion inner membrane. It carries out the reaction H(+)(in) = H(+)(out). Its function is as follows. Subunit a, of the mitochondrial membrane ATP synthase complex (F(1)F(0) ATP synthase or Complex V) that produces ATP from ADP in the presence of a proton gradient across the membrane which is generated by electron transport complexes of the respiratory chain. ATP synthase complex consist of a soluble F(1) head domain - the catalytic core - and a membrane F(1) domain - the membrane proton channel. These two domains are linked by a central stalk rotating inside the F(1) region and a stationary peripheral stalk. During catalysis, ATP synthesis in the catalytic domain of F(1) is coupled via a rotary mechanism of the central stalk subunits to proton translocation. With the subunit c (ATP5MC1), forms the proton-conducting channel in the F(0) domain, that contains two crucial half-channels (inlet and outlet) that facilitate proton movement from the mitochondrial intermembrane space (IMS) into the matrix. Protons are taken up via the inlet half-channel and released through the outlet half-channel, following a Grotthuss mechanism. This chain is ATP synthase F(0) complex subunit a, found in Elephas maximus (Indian elephant).